The primary structure comprises 545 residues: CTP synthase (545 aa).

Residues 1-266 are amidoligase domain; that stretch reads MTTNYIFVTG…DDYICKRFSL (266 aa). Residue Ser14 participates in CTP binding. Ser14 is a UTP binding site. Residues 15–20 and Asp72 contribute to the ATP site; that span reads SLGKGI. Residues Asp72 and Glu140 each contribute to the Mg(2+) site. CTP-binding positions include 147-149, 187-192, and Lys223; these read DIE and KTKPTQ. Residues 187-192 and Lys223 each bind UTP; that span reads KTKPTQ. 239–241 serves as a coordination point for ATP; it reads KDV. The Glutamine amidotransferase type-1 domain occupies 291 to 542; that stretch reads TIGMVGKYIE…VKAASEYQKR (252 aa). Gly352 is an L-glutamine binding site. The Nucleophile; for glutamine hydrolysis role is filled by Cys379. Residues 380–383, Glu403, and Arg470 contribute to the L-glutamine site; that span reads LGMQ. Active-site residues include His515 and Glu517.

It belongs to the CTP synthase family. In terms of assembly, homotetramer.

It catalyses the reaction UTP + L-glutamine + ATP + H2O = CTP + L-glutamate + ADP + phosphate + 2 H(+). It carries out the reaction L-glutamine + H2O = L-glutamate + NH4(+). The catalysed reaction is UTP + NH4(+) + ATP = CTP + ADP + phosphate + 2 H(+). Its pathway is pyrimidine metabolism; CTP biosynthesis via de novo pathway; CTP from UDP: step 2/2. Allosterically activated by GTP, when glutamine is the substrate; GTP has no effect on the reaction when ammonia is the substrate. The allosteric effector GTP functions by stabilizing the protein conformation that binds the tetrahedral intermediate(s) formed during glutamine hydrolysis. Inhibited by the product CTP, via allosteric rather than competitive inhibition. Catalyzes the ATP-dependent amination of UTP to CTP with either L-glutamine or ammonia as the source of nitrogen. Regulates intracellular CTP levels through interactions with the four ribonucleotide triphosphates. This is CTP synthase from Klebsiella pneumoniae subsp. pneumoniae (strain ATCC 700721 / MGH 78578).